The chain runs to 383 residues: ATP phosphoribosyltransferase regulatory subunit (383 aa).

The protein belongs to the class-II aminoacyl-tRNA synthetase family. HisZ subfamily. Heteromultimer composed of HisG and HisZ subunits.

It localises to the cytoplasm. It participates in amino-acid biosynthesis; L-histidine biosynthesis; L-histidine from 5-phospho-alpha-D-ribose 1-diphosphate: step 1/9. Its function is as follows. Required for the first step of histidine biosynthesis. May allow the feedback regulation of ATP phosphoribosyltransferase activity by histidine. The sequence is that of ATP phosphoribosyltransferase regulatory subunit from Cupriavidus necator (strain ATCC 17699 / DSM 428 / KCTC 22496 / NCIMB 10442 / H16 / Stanier 337) (Ralstonia eutropha).